Reading from the N-terminus, the 426-residue chain is Serine--tRNA ligase (426 aa).

231-233 (TLE) is an L-serine binding site. Residue 262-264 (RSE) coordinates ATP. Glutamate 285 provides a ligand contact to L-serine. 349 to 352 (EISS) is an ATP binding site. Serine 385 is an L-serine binding site.

It belongs to the class-II aminoacyl-tRNA synthetase family. Type-1 seryl-tRNA synthetase subfamily. As to quaternary structure, homodimer. The tRNA molecule binds across the dimer.

The protein resides in the cytoplasm. The catalysed reaction is tRNA(Ser) + L-serine + ATP = L-seryl-tRNA(Ser) + AMP + diphosphate + H(+). It catalyses the reaction tRNA(Sec) + L-serine + ATP = L-seryl-tRNA(Sec) + AMP + diphosphate + H(+). It functions in the pathway aminoacyl-tRNA biosynthesis; selenocysteinyl-tRNA(Sec) biosynthesis; L-seryl-tRNA(Sec) from L-serine and tRNA(Sec): step 1/1. Catalyzes the attachment of serine to tRNA(Ser). Is also able to aminoacylate tRNA(Sec) with serine, to form the misacylated tRNA L-seryl-tRNA(Sec), which will be further converted into selenocysteinyl-tRNA(Sec). The sequence is that of Serine--tRNA ligase from Malacoplasma penetrans (strain HF-2) (Mycoplasma penetrans).